Reading from the N-terminus, the 83-residue chain is Small ribosomal subunit protein eS21 (83 aa).

The protein belongs to the eukaryotic ribosomal protein eS21 family. Component of the 40S small ribosomal subunit.

The protein localises to the cytoplasm. It localises to the cytosol. It is found in the rough endoplasmic reticulum. The chain is Small ribosomal subunit protein eS21 (RpS21) from Agriotes lineatus (Lined click beetle).